A 463-amino-acid chain; its full sequence is Quinolone resistance protein NorB (463 aa).

14 helical membrane-spanning segments follow: residues 17–37 (IGIV…VNVV), 53–73 (IAVS…GGLA), 86–106 (IILN…LLLI), 107–127 (IGRL…LSII), 142–162 (YWSI…GAVA), 165–185 (LGWR…LFLI), 201–221 (FDIK…ILIT), 230–250 (SLLF…FIVL), 273–293 (TASN…NTFV), 299–319 (YSSL…LIMI), 334–354 (PMLI…LTFL), 357–377 (ILYV…LGIY), 403–423 (MASA…YAIV), and 435–455 (IALW…LLLV).

The protein belongs to the major facilitator superfamily. TCR/Tet family.

The protein resides in the cell membrane. Multidrug efflux pump that acts independently of NorA and is one of the factors that confers resistance against diverse quinolones and chemical compounds. This Staphylococcus aureus (strain Mu3 / ATCC 700698) protein is Quinolone resistance protein NorB (norB).